The sequence spans 56 residues: MAVQQNKPTRSKRGMRRSHDALTATHVSVDKTSGETHLRHHVTADGYYRGRKVINK.

The interval 1-35 (MAVQQNKPTRSKRGMRRSHDALTATHVSVDKTSGE) is disordered.

This sequence belongs to the bacterial ribosomal protein bL32 family.

This chain is Large ribosomal subunit protein bL32, found in Proteus mirabilis (strain HI4320).